The chain runs to 727 residues: MAPPAKRARRGLVPPGYKYLGPGNSLDQGEPTNPSDAAAKEHDEAYAAYLRSGKNPYLYFSPADQRFIDQTKDAKDWGGKIGHYFFRAKKAIAPVLTDTPDHPSTSRPTKPTKRSKPPPHIFINLAKKKKAGAGQVKRDNLAPMSDGAVQPDGGQPAVRNERATGSGNGSGGGGGGGSGGVGISTGTFNNQTEFKFLENGWVEITANSSRLVHLNMPESENYRRVVVNNMDKTAVNGNMALDDIHAQIVTPWSLVDANAWGVWFNPGDWQLIVNTMSELHLVSFEQEIFNVVLKTVSESATQPPTKVYNNDLTASLMVALDSNNTMPFTPAAMRSETLGFYPWKPTIPTPWRYYFQWDRTLIPSHTGTSGTPTNIYHGTDPDDVQFYTIENSVPVHLLRTGDEFATGTFFFDCKPCRLTHTWQTNRALGLPPFLNSLPQSEGATNFGDIGVQQDKRRGVTQMGNTNYITEATIMRPAEVGYSAPYYSFEASTQGPFKTPIAAGRGGAQTDENQAADGNPRYAFGRQHGQKTTTTGETPERFTYIAHQDTGRYPEGDWIQNINFNLPVTNDNVLLPTDPIGGKTGINYTNIFNTYGPLTALNNVPPVYPNGQIWDKEFDTDLKPRLHVNAPFVCQNNCPGQLFVKVAPNLTNEYDPDASANMSRIVTYSDFWWKGKLVFKAKLRASHTWNPIQQMSINVDNQFNYVPSNIGGMKIVYEKSQLAPRKLY.

Residues 1-10 (MAPPAKRARR) show a composition bias toward basic residues. Disordered regions lie at residues 1–39 (MAPP…DAAA), 95–120 (VLTD…PPPH), and 141–184 (LAPM…VGIS). A Nuclear localization signal motif is present at residues 4–13 (PAKRARRGLV). Residues 19-64 (YLGPGNSLDQGEPTNPSDAAAKEHDEAYAAYLRSGKNPYLYFSPAD) form a phospholipase A2-like region. Polar residues predominate over residues 25–35 (SLDQGEPTNPS). Gly residues predominate over residues 166–183 (SGNGSGGGGGGGSGGVGI). Residue asparagine 323 participates in Mg(2+) binding. A disulfide bridge links cysteine 633 with cysteine 637.

Belongs to the parvoviridae capsid protein family. Interacts with host TFRC.

Its subcellular location is the virion. It is found in the host nucleus. Its function is as follows. Capsid protein self-assembles to form an icosahedral capsid with a T=1 symmetry, about 22 nm in diameter, and consisting of 60 copies of two size variants of the capsid proteins, VP1 and VP2, which differ by the presence of an N-terminal extension in the minor protein VP1. The capsid encapsulates the genomic ssDNA. Capsid proteins are responsible for the attachment to host cell receptor TFRC. This attachment induces virion internalization predominantly through clathrin-endocytosis. Binding to the host receptors also induces capsid rearrangements leading to surface exposure of VP1 N-terminus, specifically its phospholipase A2-like region and nuclear localization signal(s). VP1 N-terminus might serve as a lipolytic enzyme to breach the endosomal membrane during entry into host cell. Intracytoplasmic transport involves microtubules and interaction between capsid proteins and host dynein. Exposure of nuclear localization signal probably allows nuclear import of capsids. This Canis lupus familiaris (Dog) protein is Capsid protein VP1.